A 513-amino-acid chain; its full sequence is ATP synthase subunit alpha (513 aa).

169–176 (GDRQTGKT) contacts ATP.

Belongs to the ATPase alpha/beta chains family. In terms of assembly, F-type ATPases have 2 components, CF(1) - the catalytic core - and CF(0) - the membrane proton channel. CF(1) has five subunits: alpha(3), beta(3), gamma(1), delta(1), epsilon(1). CF(0) has three main subunits: a(1), b(2) and c(9-12). The alpha and beta chains form an alternating ring which encloses part of the gamma chain. CF(1) is attached to CF(0) by a central stalk formed by the gamma and epsilon chains, while a peripheral stalk is formed by the delta and b chains.

Its subcellular location is the cell inner membrane. It carries out the reaction ATP + H2O + 4 H(+)(in) = ADP + phosphate + 5 H(+)(out). Its function is as follows. Produces ATP from ADP in the presence of a proton gradient across the membrane. The alpha chain is a regulatory subunit. In Mannheimia succiniciproducens (strain KCTC 0769BP / MBEL55E), this protein is ATP synthase subunit alpha.